The sequence spans 255 residues: Hemin import ATP-binding protein HmuV (255 aa).

Residues 2 to 238 form the ABC transporter domain; it reads LDVEGLHLKR…AALNAVFGID (237 aa). 34-41 provides a ligand contact to ATP; it reads GPNGAGKS.

It belongs to the ABC transporter superfamily. Heme (hemin) importer (TC 3.A.1.14.5) family. As to quaternary structure, the complex is composed of two ATP-binding proteins (HmuV), two transmembrane proteins (HmuU) and a solute-binding protein (HmuT).

Its subcellular location is the cell inner membrane. Functionally, part of the ABC transporter complex HmuTUV involved in hemin import. Responsible for energy coupling to the transport system. The chain is Hemin import ATP-binding protein HmuV from Pseudomonas entomophila (strain L48).